The sequence spans 756 residues: 5-methyltetrahydropteroyltriglutamate--homocysteine methyltransferase (756 aa).

5-methyltetrahydropteroyltri-L-glutamate contacts are provided by residues 16-19 and lysine 116; that span reads RELK. L-homocysteine is bound by residues 435-437 and glutamate 488; that span reads IGS. L-methionine is bound by residues 435–437 and glutamate 488; that span reads IGS. 5-methyltetrahydropteroyltri-L-glutamate is bound by residues 519 to 520 and tryptophan 565; that span reads RC. Aspartate 603 lines the L-homocysteine pocket. Residue aspartate 603 coordinates L-methionine. Glutamate 609 lines the 5-methyltetrahydropteroyltri-L-glutamate pocket. Residues histidine 645, cysteine 647, and glutamate 669 each contribute to the Zn(2+) site. Histidine 698 (proton donor) is an active-site residue. Cysteine 730 provides a ligand contact to Zn(2+).

Belongs to the vitamin-B12 independent methionine synthase family. Requires Zn(2+) as cofactor.

The catalysed reaction is 5-methyltetrahydropteroyltri-L-glutamate + L-homocysteine = tetrahydropteroyltri-L-glutamate + L-methionine. Its pathway is amino-acid biosynthesis; L-methionine biosynthesis via de novo pathway; L-methionine from L-homocysteine (MetE route): step 1/1. Functionally, catalyzes the transfer of a methyl group from 5-methyltetrahydrofolate to homocysteine resulting in methionine formation. This is 5-methyltetrahydropteroyltriglutamate--homocysteine methyltransferase from Marinobacter nauticus (strain ATCC 700491 / DSM 11845 / VT8) (Marinobacter aquaeolei).